The following is a 619-amino-acid chain: (-)-camphene synthase, chloroplastic (619 aa).

The N-terminal 47 residues, 1–47 (MALVSVAPLVSMRRSLFSSPYELKSIDKTIPNLVMCRKRMSGTPSIR), are a transit peptide targeting the chloroplast. Mg(2+) contacts are provided by D370, D374, and D522. Residues 370–374 (DDIYD) carry the DDXXD motif motif.

This sequence belongs to the terpene synthase family. Tpsd subfamily. The cofactor is Mg(2+). It depends on Mn(2+) as a cofactor.

The protein resides in the plastid. It is found in the chloroplast. The enzyme catalyses (2E)-geranyl diphosphate = (1S,4R)-camphene + diphosphate. The catalysed reaction is (2E)-geranyl diphosphate = (1R,5R)-alpha-pinene + diphosphate. It carries out the reaction (2E)-geranyl diphosphate = tricyclene + diphosphate. It catalyses the reaction (2E)-geranyl diphosphate = beta-myrcene + diphosphate. The enzyme catalyses (2E)-geranyl diphosphate = (1S,5S)-beta-pinene + diphosphate. The catalysed reaction is (2E)-geranyl diphosphate = (1S,5S)-alpha-pinene + diphosphate. It functions in the pathway terpene metabolism; oleoresin biosynthesis. Its pathway is secondary metabolite biosynthesis; terpenoid biosynthesis. Monoterpene synthase (TPS) involved in the biosynthesis of monoterpene natural products included in conifer oleoresin secretions and volatile emissions; these compounds contribute to biotic and abiotic stress defense against herbivores and pathogens. Catalyzes the conversion of (2E)-geranyl diphosphate (GPP) to (-)-camphene, (+)-alpha-pinene and (-)-alpha-pinene, and, to a lower extent, to tricyclene, myrcene and (-)-beta-pinene. This is (-)-camphene synthase, chloroplastic from Pinus contorta (Shore pine).